Consider the following 329-residue polypeptide: Ubiquinol oxidase 1c, mitochondrial (329 aa).

Residues 1-45 constitute a mitochondrion transit peptide; sequence MITTLLRRSLLDASKQATSINGILFHQLAPAKYFRVPAVGGLRDF. Residues 154-174 traverse the membrane as a helical segment; sequence AIMLETVAAVPGMVGGMLMHF. Fe cation is bound by residues Glu158, Glu197, and His200. The chain crosses the membrane as a helical span at residues 216–236; that stretch reads ALVISVQGVFFNAYLIGYIIS. Fe cation is bound by residues Glu248, Glu299, and His302.

This sequence belongs to the alternative oxidase family. As to quaternary structure, homodimer; disulfide-linked. The cofactor is Fe cation. As to expression, expressed in roots, stems, leaves, cotyledons and flowers. High expression in stamens.

The protein resides in the mitochondrion inner membrane. The enzyme catalyses 2 a ubiquinol + O2 = 2 a ubiquinone + 2 H2O. In terms of biological role, catalyzes the cyanide-resistant oxidation of ubiquinol and the reduction of molecular oxygen to water, but does not translocate protons and consequently is not linked to oxidative phosphorylation. May increase respiration when the cytochrome respiratory pathway is restricted, or in response to low temperatures. This is Ubiquinol oxidase 1c, mitochondrial (AOX1C) from Arabidopsis thaliana (Mouse-ear cress).